The primary structure comprises 339 residues: AB hydrolase superfamily protein B1A11.02 (339 aa).

Belongs to the AB hydrolase superfamily.

The protein is AB hydrolase superfamily protein B1A11.02 of Schizosaccharomyces pombe (strain 972 / ATCC 24843) (Fission yeast).